We begin with the raw amino-acid sequence, 433 residues long: Serine/threonine-protein phosphatase 2A activator 2 (433 aa).

The segment covering 1–10 (MTSQAPPQPA) has biased composition (pro residues). Disordered regions lie at residues 1–67 (MTSQ…NWTF) and 367–400 (SMSEDTGAGDEADVEDDPHAGHDHTGKAHDGTGW). Low complexity predominate over residues 11 to 23 (SSPGVAAPAAASS). The segment covering 45-59 (NPTPIPETPALPTPP) has biased composition (pro residues). Positions 367–382 (SMSEDTGAGDEADVED) are enriched in acidic residues. The span at 383 to 396 (DPHAGHDHTGKAHD) shows a compositional bias: basic and acidic residues.

This sequence belongs to the PTPA-type PPIase family.

The protein resides in the cytoplasm. The enzyme catalyses [protein]-peptidylproline (omega=180) = [protein]-peptidylproline (omega=0). PPIases accelerate the folding of proteins. It catalyzes the cis-trans isomerization of proline imidic peptide bonds in oligopeptides. Acts as a regulatory subunit for PP2A-like phosphatases modulating their activity or substrate specificity, probably by inducing a conformational change in the catalytic subunit, a direct target of the PPIase. Can reactivate inactive phosphatase PP2A-phosphatase methylesterase complexes (PP2Ai) in presence of ATP and Mg(2+) by dissociating the inactive form from the complex. This is Serine/threonine-protein phosphatase 2A activator 2 (RRD2) from Gibberella zeae (strain ATCC MYA-4620 / CBS 123657 / FGSC 9075 / NRRL 31084 / PH-1) (Wheat head blight fungus).